A 315-amino-acid chain; its full sequence is MKIVFLDSTAIPKHISIPRPSFEHTWTEYEHTSAEQTIERVKDADIVITSKVIFDRETLQQLPKLKLIAITATGTNNVDLVAAEEMGIAVRNVTGYSSTTVPEHVIGLIFSLKHSLAGWLRDQTEAKWAESKQFCYFDYPITDVRGSTLGVFGKGCLGTEVGRLANAVGMKVLYAEHKDATVCREGYTPFDEVLKQADIVTLHCPLTETTKDLINAETLSKMKKGAFLINTGRGPLIDELALVDALKTGHLGGAALDVMVKEPPEKDNPLILAAKTMPNLIITPHIAWASDSAVTTLVGKVMQNIEEFVQQLHQK.

NAD(+) contacts are provided by residues threonine 73, 156–157, 231–233, and aspartate 257; these read CL and TGR. The active site involves arginine 233. Residue glutamate 262 is part of the active site. Histidine 285 acts as the Proton donor in catalysis. 285–288 provides a ligand contact to NAD(+); it reads HIAW.

Belongs to the D-isomer specific 2-hydroxyacid dehydrogenase family.

In Haemophilus influenzae (strain ATCC 51907 / DSM 11121 / KW20 / Rd), this protein is Putative 2-hydroxyacid dehydrogenase HI_1556.